The sequence spans 377 residues: tRNA-queuosine alpha-mannosyltransferase (377 aa).

The protein belongs to the glycosyltransferase group 1 family. Glycosyltransferase 4 subfamily.

The enzyme catalyses queuosine(34) in tRNA(Asp) + GDP-alpha-D-mannose = O-4''-alpha-D-mannosylqueuosine(34) in tRNA(Asp) + GDP + H(+). Glycosyltransferase that specifically catalyzes mannosylation of cytoplasmic tRNA(Asp) modified with queuosine at position 34 (queuosine(34)). Mannosylates the cyclopentene moiety of queuosine(34) in tRNA(Asp) to form mannosyl-queuosine(34). The chain is tRNA-queuosine alpha-mannosyltransferase from Drosophila melanogaster (Fruit fly).